The sequence spans 120 residues: ATP-dependent Clp protease adapter protein ClpS (120 aa).

Belongs to the ClpS family. As to quaternary structure, binds to the N-terminal domain of the chaperone ClpA.

Its function is as follows. Involved in the modulation of the specificity of the ClpAP-mediated ATP-dependent protein degradation. This Azotobacter vinelandii (strain DJ / ATCC BAA-1303) protein is ATP-dependent Clp protease adapter protein ClpS.